We begin with the raw amino-acid sequence, 470 residues long: L-fuculokinase (470 aa).

The protein belongs to the FGGY kinase family. It depends on a divalent metal cation as a cofactor.

The enzyme catalyses L-fuculose + ATP = L-fuculose 1-phosphate + ADP + H(+). It functions in the pathway carbohydrate degradation; L-fucose degradation; L-lactaldehyde and glycerone phosphate from L-fucose: step 2/3. Functionally, catalyzes the phosphorylation of L-fuculose. This Haemophilus influenzae (strain ATCC 51907 / DSM 11121 / KW20 / Rd) protein is L-fuculokinase.